A 1204-amino-acid polypeptide reads, in one-letter code: Major DNA-binding protein (1204 aa).

Residues 289 to 314 form a disordered region; it reads SGTTTARGARRNDVNSTSKPSPSGGF. A zinc finger lies at 497–510; that stretch reads CSLCEKHTRPVCAH. Short sequence motifs (required for filament formation) lie at residues 841–842 and 1146–1148; these read FW and FNF. Residues 1177-1204 form a required for nuclear localization region; sequence LKRPPEDDELFDLSGIPIKHGNITMEMI.

It belongs to the herpesviridae major DNA-binding protein family. In terms of assembly, homooligomers. Forms double-helical filaments necessary for the formation of replication compartments within the host nucleus. Interacts with the origin-binding protein. Interacts with the helicase primase complex; this interaction stimulates primer synthesis activity of the helicase-primase complex. Interacts with the DNA polymerase. Interacts with the alkaline exonuclease; this interaction increases its nuclease processivity.

Its subcellular location is the host nucleus. Plays several crucial roles in viral infection. Participates in the opening of the viral DNA origin to initiate replication by interacting with the origin-binding protein. May disrupt loops, hairpins and other secondary structures present on ssDNA to reduce and eliminate pausing of viral DNA polymerase at specific sites during elongation. Promotes viral DNA recombination by performing strand-transfer, characterized by the ability to transfer a DNA strand from a linear duplex to a complementary single-stranded DNA circle. Can also catalyze the renaturation of complementary single strands. Additionally, reorganizes the host cell nucleus, leading to the formation of prereplicative sites and replication compartments. This process is driven by the protein which can form double-helical filaments in the absence of DNA. This Homo sapiens (Human) protein is Major DNA-binding protein.